The following is a 574-amino-acid chain: Aspartate--tRNA ligase (574 aa).

Glu172 contacts L-aspartate. Residues 196 to 199 (QIFK) form an aspartate region. An L-aspartate-binding site is contributed by Arg218. ATP-binding positions include 218–220 (RDE) and Gln227. His453 is a binding site for L-aspartate. Glu487 contacts ATP. An L-aspartate-binding site is contributed by Arg494. 539–542 (GLDR) lines the ATP pocket.

It belongs to the class-II aminoacyl-tRNA synthetase family. Type 1 subfamily. As to quaternary structure, homodimer.

The protein resides in the cytoplasm. The enzyme catalyses tRNA(Asp) + L-aspartate + ATP = L-aspartyl-tRNA(Asp) + AMP + diphosphate. Catalyzes the attachment of L-aspartate to tRNA(Asp) in a two-step reaction: L-aspartate is first activated by ATP to form Asp-AMP and then transferred to the acceptor end of tRNA(Asp). The protein is Aspartate--tRNA ligase of Blochmanniella pennsylvanica (strain BPEN).